Reading from the N-terminus, the 299-residue chain is ATP synthase gamma chain (299 aa).

It belongs to the ATPase gamma chain family. As to quaternary structure, F-type ATPases have 2 components, CF(1) - the catalytic core - and CF(0) - the membrane proton channel. CF(1) has five subunits: alpha(3), beta(3), gamma(1), delta(1), epsilon(1). CF(0) has three main subunits: a, b and c.

The protein resides in the cell inner membrane. Functionally, produces ATP from ADP in the presence of a proton gradient across the membrane. The gamma chain is believed to be important in regulating ATPase activity and the flow of protons through the CF(0) complex. This chain is ATP synthase gamma chain, found in Rhodospirillum rubrum.